Here is a 214-residue protein sequence, read N- to C-terminus: 3,4-dihydroxy-2-butanone 4-phosphate synthase (214 aa).

D-ribulose 5-phosphate-binding positions include 37 to 38, D42, 150 to 154, and E174; these read RE and RRGHT. Mg(2+) is bound at residue E38. H153 is a binding site for Mg(2+).

This sequence belongs to the DHBP synthase family. Homodimer. Mg(2+) serves as cofactor. It depends on Mn(2+) as a cofactor.

The enzyme catalyses D-ribulose 5-phosphate = (2S)-2-hydroxy-3-oxobutyl phosphate + formate + H(+). It participates in cofactor biosynthesis; riboflavin biosynthesis; 2-hydroxy-3-oxobutyl phosphate from D-ribulose 5-phosphate: step 1/1. Functionally, catalyzes the conversion of D-ribulose 5-phosphate to formate and 3,4-dihydroxy-2-butanone 4-phosphate. The chain is 3,4-dihydroxy-2-butanone 4-phosphate synthase from Pasteurella multocida (strain Pm70).